A 198-amino-acid chain; its full sequence is Dephospho-CoA kinase (198 aa).

The DPCK domain maps to 3-198 (IVGITGGIGS…LLAKERLELA (196 aa)). ATP is bound at residue 11–16 (GSGKTT).

Belongs to the CoaE family.

It localises to the cytoplasm. The enzyme catalyses 3'-dephospho-CoA + ATP = ADP + CoA + H(+). It participates in cofactor biosynthesis; coenzyme A biosynthesis; CoA from (R)-pantothenate: step 5/5. Its function is as follows. Catalyzes the phosphorylation of the 3'-hydroxyl group of dephosphocoenzyme A to form coenzyme A. In Dehalococcoides mccartyi (strain ATCC BAA-2266 / KCTC 15142 / 195) (Dehalococcoides ethenogenes (strain 195)), this protein is Dephospho-CoA kinase.